We begin with the raw amino-acid sequence, 621 residues long: Interleukin-1 receptor-associated kinase-like 2 (621 aa).

The region spanning leucine 13–lysine 94 is the Death domain. Residues glycine 113–serine 175 form a disordered region. Polar residues predominate over residues alanine 157–alanine 169. Residues phenylalanine 206 to leucine 476 form the Protein kinase domain. Residues isoleucine 212–valine 220, lysine 233, and lysine 333–asparagine 336 each bind ATP. Positions glutamate 503–proline 522 are enriched in polar residues. The tract at residues glutamate 503–aspartate 534 is disordered.

It belongs to the protein kinase superfamily. TKL Ser/Thr protein kinase family. Pelle subfamily. As to quaternary structure, interacts with MYD88. IL-1 stimulation leads to the formation of a signaling complex which dissociates from the IL-1 receptor following the binding of PELI1.

Binds to the IL-1 type I receptor following IL-1 engagement, triggering intracellular signaling cascades leading to transcriptional up-regulation and mRNA stabilization. The polypeptide is Interleukin-1 receptor-associated kinase-like 2 (IRAK2) (Bos taurus (Bovine)).